A 669-amino-acid chain; its full sequence is JmjC domain-containing histone demethylation protein 1 (669 aa).

Residues 1-61 (MTAVAASSRV…RRKKPRTELV (61 aa)) form a disordered region. Composition is skewed to polar residues over residues 16-27 (ASSSAHPRTLRS) and 36-49 (HDSS…QSKQ). The PHD-type zinc finger occupies 65–126 (ELDCAACPAV…KWYCQPCITR (62 aa)). 2 disordered regions span residues 131–150 (FESG…RPPR) and 220–256 (PPDR…QATH). The span at 246–255 (KPARAKKQAT) shows a compositional bias: basic residues. The region spanning 332 to 494 (VTGTPMQAYV…TQWKLVEIEE (163 aa)) is the JmjC domain. Fe cation-binding residues include His-390 and Asp-392. Lys-407 lines the substrate pocket. His-462 is a Fe cation binding site.

It belongs to the JHDM1 histone demethylase family. Requires Fe(2+) as cofactor.

The protein localises to the nucleus. It carries out the reaction N(6),N(6)-dimethyl-L-lysyl(36)-[histone H3] + 2 2-oxoglutarate + 2 O2 = L-lysyl(36)-[histone H3] + 2 formaldehyde + 2 succinate + 2 CO2. In terms of biological role, histone demethylase that specifically demethylates 'Lys-36' of histone H3, thereby playing a central role in histone code. The sequence is that of JmjC domain-containing histone demethylation protein 1 (JHD1) from Mycosarcoma maydis (Corn smut fungus).